The primary structure comprises 642 residues: Transmembrane 9 superfamily member 4 (642 aa).

Positions 1-23 are cleaved as a signal peptide; sequence MATAMDWLPWSLLLFSLMCETSA. Residues 24–281 are Extracellular-facing; sequence FYVPGVAPIN…TMSDVQIHWF (258 aa). Residues 282–302 traverse the membrane as a helical segment; it reads SIINSVVVVFFLSGILSMIII. Topologically, residues 303–346 are cytoplasmic; it reads RTLRKDIANYNKEDDIEDTMEESGWKLVHGDVFRPPQYPMILSS. A Phosphotyrosine modification is found at tyrosine 312. Residues 347-367 traverse the membrane as a helical segment; that stretch reads LLGSGIQLFCMILIVIFVAML. At 368 to 376 the chain is on the extracellular side; that stretch reads GMLSPSSRG. The chain crosses the membrane as a helical span at residues 377 to 397; that stretch reads ALMTTACFLFMFMGVFGGFSA. Residues 398–416 are Cytoplasmic-facing; the sequence is GRLYRTLKGHRWKKGAFCT. A helical transmembrane segment spans residues 417 to 437; the sequence is ATLYPGVVFGICFVLNCFIWG. The Extracellular portion of the chain corresponds to 438–449; the sequence is KHSSGAVPFPTM. Residues 450 to 470 traverse the membrane as a helical segment; that stretch reads VALLCMWFGISLPLVYLGYYF. Topologically, residues 471 to 501 are cytoplasmic; the sequence is GFRKQPYDNPVRTNQIPRQIPEQRWYMNRFV. A helical membrane pass occupies residues 502 to 522; that stretch reads GILMAGILPFGAMFIELFFIF. The Extracellular portion of the chain corresponds to 523 to 535; that stretch reads SAIWENQFYYLFG. The helical transmembrane segment at 536–556 threads the bilayer; that stretch reads FLFLVFIILVVSCSQISIVMV. Over 557–570 the chain is Cytoplasmic; that stretch reads YFQLCAEDYRWWWR. The chain crosses the membrane as a helical span at residues 571-591; the sequence is NFLVSGGSAFYVLVYAIFYFV. The Extracellular portion of the chain corresponds to 592–598; it reads NKLDIVE. A helical transmembrane segment spans residues 599–619; that stretch reads FIPSLLYFGYTALMVLSFWLL. Over 620 to 642 the chain is Cytoplasmic; the sequence is TGTIGFYAAYMFVRKIYAAVKID.

Belongs to the nonaspanin (TM9SF) (TC 9.A.2) family. As to quaternary structure, interacts with ATP6V1H in colon cancer cells. In terms of tissue distribution, highly expressed in metastatic melanoma cells whereas it is undetectable in primary melanoma cells, healthy skin tissues and peripheral blood lymphocytes. Expressed in CD34(+) hematopoietic progenitor cells and during monocyte and granulocyte differentiation. Overexpressed in acute myeloid leukemia, in particular in those displaying granulocytic differentiation (at protein level).

Its subcellular location is the membrane. It localises to the golgi apparatus. The protein localises to the early endosome. Its function is as follows. Associates with proteins harboring glycine-rich transmembrane domains and ensures their efficient localization to the cell surface. Regulates the assembly and activity of V-ATPase in colon cancer cells via its interaction with V-type proton ATPase subunit H (ATP6V1H) and contributes to V-ATPase-mediated pH alterations in cancer cells which play an important role in drug resistance and invasiveness of colon cancer cells. Plays an important role in an atypical phagocytic activity of metastatic melanoma cells called cannibalism and is involved in the pH regulation of the intracellular vesicles in tumor cells. This chain is Transmembrane 9 superfamily member 4 (TM9SF4), found in Homo sapiens (Human).